Consider the following 125-residue polypeptide: uncharacterized protein (125 aa).

2 disordered regions span residues 1–27 and 76–125; these read MNKT…GSSS and NKNN…RFKK. The span at 18–27 shows a compositional bias: low complexity; sequence GMNSTTGSSS.

This is an uncharacterized protein from Dictyostelium discoideum (Social amoeba).